A 285-amino-acid polypeptide reads, in one-letter code: Glutamate racemase (285 aa).

Residues 28-29 and 60-61 contribute to the substrate site; these read DS and YG. Residue Cys-92 is the Proton donor/acceptor of the active site. 93–94 provides a ligand contact to substrate; sequence NT. Cys-204 serves as the catalytic Proton donor/acceptor. 205–206 is a substrate binding site; sequence TH.

The protein belongs to the aspartate/glutamate racemases family.

It catalyses the reaction L-glutamate = D-glutamate. The protein operates within cell wall biogenesis; peptidoglycan biosynthesis. Its function is as follows. Provides the (R)-glutamate required for cell wall biosynthesis. The polypeptide is Glutamate racemase (Escherichia fergusonii (strain ATCC 35469 / DSM 13698 / CCUG 18766 / IAM 14443 / JCM 21226 / LMG 7866 / NBRC 102419 / NCTC 12128 / CDC 0568-73)).